A 190-amino-acid polypeptide reads, in one-letter code: Small ribosomal subunit protein eS7 (190 aa).

Belongs to the eukaryotic ribosomal protein eS7 family.

This Avicennia marina (Grey mangrove) protein is Small ribosomal subunit protein eS7 (RPS7).